We begin with the raw amino-acid sequence, 240 residues long: Pyridoxine 5'-phosphate synthase (240 aa).

N7 provides a ligand contact to 3-amino-2-oxopropyl phosphate. Position 9-10 (9-10 (DH)) interacts with 1-deoxy-D-xylulose 5-phosphate. R18 provides a ligand contact to 3-amino-2-oxopropyl phosphate. H43 (proton acceptor) is an active-site residue. Residues R45 and H50 each coordinate 1-deoxy-D-xylulose 5-phosphate. Residue E70 is the Proton acceptor of the active site. T100 lines the 1-deoxy-D-xylulose 5-phosphate pocket. Catalysis depends on H191, which acts as the Proton donor. 3-amino-2-oxopropyl phosphate contacts are provided by residues G192 and 213–214 (GH).

Belongs to the PNP synthase family. Homooctamer; tetramer of dimers.

It is found in the cytoplasm. The catalysed reaction is 3-amino-2-oxopropyl phosphate + 1-deoxy-D-xylulose 5-phosphate = pyridoxine 5'-phosphate + phosphate + 2 H2O + H(+). Its pathway is cofactor biosynthesis; pyridoxine 5'-phosphate biosynthesis; pyridoxine 5'-phosphate from D-erythrose 4-phosphate: step 5/5. Functionally, catalyzes the complicated ring closure reaction between the two acyclic compounds 1-deoxy-D-xylulose-5-phosphate (DXP) and 3-amino-2-oxopropyl phosphate (1-amino-acetone-3-phosphate or AAP) to form pyridoxine 5'-phosphate (PNP) and inorganic phosphate. This Acaryochloris marina (strain MBIC 11017) protein is Pyridoxine 5'-phosphate synthase.